We begin with the raw amino-acid sequence, 906 residues long: Cadherin-2 (906 aa).

An N-terminal signal peptide occupies residues methionine 1–alanine 25. A propeptide spanning residues serine 26–arginine 159 is cleaved from the precursor. Serine 96 and serine 135 each carry phosphoserine. 5 Cadherin domains span residues aspartate 160–phenylalanine 267, leucine 268–phenylalanine 382, threonine 383–phenylalanine 497, alanine 498–proline 603, and glutamine 604–arginine 714. The Extracellular portion of the chain corresponds to aspartate 160 to alanine 724. A Ca(2+)-binding site is contributed by glutamate 170. Asparagine 190 carries an N-linked (GlcNAc...) asparagine glycan. Residues aspartate 226, glutamate 228, aspartate 259, methionine 260, asparagine 261, aspartate 262, and asparagine 263 each coordinate Ca(2+). Asparagine 273 carries N-linked (GlcNAc...) asparagine glycosylation. Ca(2+) is bound by residues aspartate 293, aspartate 295, and asparagine 301. Asparagine 325 is a glycosylation site (N-linked (GlcNAc...) asparagine). A Ca(2+)-binding site is contributed by aspartate 353. Residues asparagine 402, asparagine 572, asparagine 622, asparagine 651, and asparagine 692 are each glycosylated (N-linked (GlcNAc...) asparagine). The chain crosses the membrane as a helical span at residues isoleucine 725–tryptophan 745. Residues methionine 746–aspartate 906 are Cytoplasmic-facing. The segment covering serine 863–glycine 880 has biased composition (low complexity). A disordered region spans residues serine 863–tyrosine 884.

Homodimer (via extracellular region). Can also form heterodimers with other cadherins (via extracellular region). Dimerization occurs in trans, i.e. with a cadherin chain from another cell. Interacts with CDCP1. Interacts with PCDH8; this complex may also include TAOK2. The interaction with PCDH8 may lead to internalization through TAOK2/p38 MAPK pathway. Identified in a complex containing FGFR4, NCAM1, CDH2, PLCG1, FRS2, SRC, SHC1, GAP43 and CTTN. May interact with OBSCN (via protein kinase domain 2). Interacts with FBXO45. In terms of processing, cleaved by MMP24. Ectodomain cleavage leads to the generation of a soluble 90 kDa N-terminal soluble fragment and a 45 kDa membrane-bound C-terminal fragment 1 (CTF1), which is further cleaved by gamma-secretase into a 35 kDa. Cleavage in neural stem cells by MMP24 affects CDH2-mediated anchorage of neural stem cells to ependymocytes in the adult subependymal zone, leading to modulate neural stem cell quiescence.

It is found in the cell membrane. Its subcellular location is the sarcolemma. It localises to the cell junction. The protein resides in the cell surface. The protein localises to the desmosome. It is found in the adherens junction. Calcium-dependent cell adhesion protein; preferentially mediates homotypic cell-cell adhesion by dimerization with a CDH2 chain from another cell. Cadherins may thus contribute to the sorting of heterogeneous cell types. Acts as a regulator of neural stem cells quiescence by mediating anchorage of neural stem cells to ependymocytes in the adult subependymal zone: upon cleavage by MMP24, CDH2-mediated anchorage is affected, leading to modulate neural stem cell quiescence. Plays a role in cell-to-cell junction formation between pancreatic beta cells and neural crest stem (NCS) cells, promoting the formation of processes by NCS cells. Required for proper neurite branching. Required for pre- and postsynaptic organization. CDH2 may be involved in neuronal recognition mechanism. In hippocampal neurons, may regulate dendritic spine density. The polypeptide is Cadherin-2 (CDH2) (Callithrix jacchus (White-tufted-ear marmoset)).